A 382-amino-acid chain; its full sequence is Queuine tRNA-ribosyltransferase (382 aa).

The active-site Proton acceptor is the Asp-94. Residues 94–98 (DSGGF), Asp-148, Gln-192, and Gly-219 contribute to the substrate site. The segment at 250 to 256 (GVGKPED) is RNA binding. Catalysis depends on Asp-269, which acts as the Nucleophile. An RNA binding; important for wobble base 34 recognition region spans residues 274-278 (TRNAR). Zn(2+)-binding residues include Cys-307, Cys-309, Cys-312, and His-338.

It belongs to the queuine tRNA-ribosyltransferase family. In terms of assembly, homodimer. Within each dimer, one monomer is responsible for RNA recognition and catalysis, while the other monomer binds to the replacement base PreQ1. It depends on Zn(2+) as a cofactor.

It catalyses the reaction 7-aminomethyl-7-carbaguanine + guanosine(34) in tRNA = 7-aminomethyl-7-carbaguanosine(34) in tRNA + guanine. It participates in tRNA modification; tRNA-queuosine biosynthesis. Its function is as follows. Catalyzes the base-exchange of a guanine (G) residue with the queuine precursor 7-aminomethyl-7-deazaguanine (PreQ1) at position 34 (anticodon wobble position) in tRNAs with GU(N) anticodons (tRNA-Asp, -Asn, -His and -Tyr). Catalysis occurs through a double-displacement mechanism. The nucleophile active site attacks the C1' of nucleotide 34 to detach the guanine base from the RNA, forming a covalent enzyme-RNA intermediate. The proton acceptor active site deprotonates the incoming PreQ1, allowing a nucleophilic attack on the C1' of the ribose to form the product. After dissociation, two additional enzymatic reactions on the tRNA convert PreQ1 to queuine (Q), resulting in the hypermodified nucleoside queuosine (7-(((4,5-cis-dihydroxy-2-cyclopenten-1-yl)amino)methyl)-7-deazaguanosine). This chain is Queuine tRNA-ribosyltransferase, found in Haemophilus ducreyi (strain 35000HP / ATCC 700724).